Consider the following 195-residue polypeptide: Type II secretion system protein J (195 aa).

Residues 1 to 7 (MINRQQG) constitute a propeptide, leader sequence. F8 carries the post-translational modification N-methylphenylalanine. Residues 8–29 (FTLLEVMAALAIFSMLSVLAFM) traverse the membrane as a helical segment.

Belongs to the GSP J family. As to quaternary structure, type II secretion is composed of four main components: the outer membrane complex, the inner membrane complex, the cytoplasmic secretion ATPase and the periplasm-spanning pseudopilus. Interacts with core component GspG. Cleaved by prepilin peptidase. Post-translationally, methylated by prepilin peptidase at the amino group of the N-terminal phenylalanine once the leader sequence is cleaved by prepilin peptidase.

It localises to the cell inner membrane. In terms of biological role, component of the type II secretion system required for the energy-dependent secretion of extracellular factors such as proteases and toxins from the periplasm. Part of the pseudopilus tip complex that is critical for the recognition and binding of secretion substrates. This Escherichia coli (strain K12) protein is Type II secretion system protein J (gspJ).